The chain runs to 357 residues: Histidinol-phosphate aminotransferase (357 aa).

Lysine 221 is modified (N6-(pyridoxal phosphate)lysine).

Belongs to the class-II pyridoxal-phosphate-dependent aminotransferase family. Histidinol-phosphate aminotransferase subfamily. The cofactor is pyridoxal 5'-phosphate.

The catalysed reaction is L-histidinol phosphate + 2-oxoglutarate = 3-(imidazol-4-yl)-2-oxopropyl phosphate + L-glutamate. Its pathway is amino-acid biosynthesis; L-histidine biosynthesis; L-histidine from 5-phospho-alpha-D-ribose 1-diphosphate: step 7/9. The chain is Histidinol-phosphate aminotransferase (hisC) from Sulfurisphaera tokodaii (strain DSM 16993 / JCM 10545 / NBRC 100140 / 7) (Sulfolobus tokodaii).